A 485-amino-acid chain; its full sequence is Protein disulfide-isomerase 1 (485 aa).

The first 20 residues, 1–20 (MSLSVSFIFLLVASIGAVVA), serve as a signal peptide directing secretion. 2 consecutive Thioredoxin domains span residues 21–130 (DSEN…KKSG) and 342–470 (YLEG…KYAG). 2 disulfide bridges follow: Cys-52-Cys-55 and Cys-393-Cys-396. Catalysis depends on nucleophile residues Cys-393 and Cys-396. Positions 482–485 (HEEL) match the Prevents secretion from ER motif.

It belongs to the protein disulfide isomerase family.

The protein resides in the endoplasmic reticulum lumen. It carries out the reaction Catalyzes the rearrangement of -S-S- bonds in proteins.. In Caenorhabditis elegans, this protein is Protein disulfide-isomerase 1 (pdi-1).